Consider the following 523-residue polypeptide: Tubulin-specific chaperone E (523 aa).

The region spanning 31–75 (GEVSGHMGSWLGIEWDDGLRGKHNGIVDGKRYFQTQTPTGGSFIR) is the CAP-Gly domain. 7 LRR repeats span residues 155-180 (LTHLTTLNVSHTLIWNWEIVASIAQQ), 181-204 (LPSLTNLNLSSNRLVLPTSSQITE), 209-232 (FRQLKRINLRSCGFSDWKDVMHTA), 235-258 (WPNILSLGLQENSLGQLAEVDRTK), 260-284 (FKQLHELDLHRTNIMDFDQVTKLGN), 285-310 (LTTLRLLNIMENGIEEIKLPDCDSQE), and 315-337 (FVSLEQLNLLHNPIWNEADAFNE).

Belongs to the TBCE family.

It localises to the cytoplasm. Functionally, tubulin-folding protein which is required for the development of the neuronal microtubule network. Essential for the development and function of neuromuscular synapses. Likely to promote microtubule formation by acting in the negative regulation of the microtubule-severing protein spas. This chain is Tubulin-specific chaperone E, found in Drosophila melanogaster (Fruit fly).